Reading from the N-terminus, the 332-residue chain is MNAPKTVTVKTALIVAGPTCSGKSALALDLARCFEGTVINADSMQVYRDLHILTARPHAADEAAVPHRLYGVLDAAVPGSVAWWRSEALREMDVAWAEERMPILCGGTGMYLRALTDGLVEVPDPGDAARSEARGLAEEIGPEALHARLMQVDPETASGLRPNDTQRISRAWEVWTGTGHGLAWWRSQPGLPPASCRFVSVQLDPEREGLRRAIDSRFGQMLEAGALEEVSALLERGLDPVLPAMRAHGVPELAAVLRGEVPLEEARKSAVLAIGRYTRRQATWFRHHALGKGDDGMISLRRYTHSAQESESQYEKIENFISERVDAAARAS.

17-24 contributes to the ATP binding site; that stretch reads GPTCSGKS. Residue 19 to 24 coordinates substrate; sequence TCSGKS. Interaction with substrate tRNA regions lie at residues 42–45 and 166–170; these read DSMQ and QRISR.

This sequence belongs to the IPP transferase family. In terms of assembly, monomer. It depends on Mg(2+) as a cofactor.

The enzyme catalyses adenosine(37) in tRNA + dimethylallyl diphosphate = N(6)-dimethylallyladenosine(37) in tRNA + diphosphate. Catalyzes the transfer of a dimethylallyl group onto the adenine at position 37 in tRNAs that read codons beginning with uridine, leading to the formation of N6-(dimethylallyl)adenosine (i(6)A). This Gluconobacter oxydans (strain 621H) (Gluconobacter suboxydans) protein is tRNA dimethylallyltransferase.